The primary structure comprises 316 residues: 4-hydroxy-3-methylbut-2-enyl diphosphate reductase (316 aa).

Residue Cys-17 coordinates [4Fe-4S] cluster. 2 residues coordinate (2E)-4-hydroxy-3-methylbut-2-enyl diphosphate: His-46 and His-79. 2 residues coordinate dimethylallyl diphosphate: His-46 and His-79. Positions 46 and 79 each coordinate isopentenyl diphosphate. Cys-101 contributes to the [4Fe-4S] cluster binding site. His-129 is a binding site for (2E)-4-hydroxy-3-methylbut-2-enyl diphosphate. His-129 serves as a coordination point for dimethylallyl diphosphate. An isopentenyl diphosphate-binding site is contributed by His-129. The Proton donor role is filled by Glu-131. Position 170 (Thr-170) interacts with (2E)-4-hydroxy-3-methylbut-2-enyl diphosphate. Cys-200 contributes to the [4Fe-4S] cluster binding site. Residues Ser-228, Ser-229, Asn-230, and Ser-273 each coordinate (2E)-4-hydroxy-3-methylbut-2-enyl diphosphate. The dimethylallyl diphosphate site is built by Ser-228, Ser-229, Asn-230, and Ser-273. 4 residues coordinate isopentenyl diphosphate: Ser-228, Ser-229, Asn-230, and Ser-273.

This sequence belongs to the IspH family. [4Fe-4S] cluster is required as a cofactor.

It catalyses the reaction isopentenyl diphosphate + 2 oxidized [2Fe-2S]-[ferredoxin] + H2O = (2E)-4-hydroxy-3-methylbut-2-enyl diphosphate + 2 reduced [2Fe-2S]-[ferredoxin] + 2 H(+). The enzyme catalyses dimethylallyl diphosphate + 2 oxidized [2Fe-2S]-[ferredoxin] + H2O = (2E)-4-hydroxy-3-methylbut-2-enyl diphosphate + 2 reduced [2Fe-2S]-[ferredoxin] + 2 H(+). It participates in isoprenoid biosynthesis; dimethylallyl diphosphate biosynthesis; dimethylallyl diphosphate from (2E)-4-hydroxy-3-methylbutenyl diphosphate: step 1/1. Its pathway is isoprenoid biosynthesis; isopentenyl diphosphate biosynthesis via DXP pathway; isopentenyl diphosphate from 1-deoxy-D-xylulose 5-phosphate: step 6/6. Catalyzes the conversion of 1-hydroxy-2-methyl-2-(E)-butenyl 4-diphosphate (HMBPP) into a mixture of isopentenyl diphosphate (IPP) and dimethylallyl diphosphate (DMAPP). Acts in the terminal step of the DOXP/MEP pathway for isoprenoid precursor biosynthesis. In Roseobacter denitrificans (strain ATCC 33942 / OCh 114) (Erythrobacter sp. (strain OCh 114)), this protein is 4-hydroxy-3-methylbut-2-enyl diphosphate reductase.